The following is a 615-amino-acid chain: Granule-bound starch synthase 1, chloroplastic/amyloplastic (615 aa).

The transit peptide at 1–70 directs the protein to the chloroplast; the sequence is MAALVTSQLA…DRRCLSMVVR (70 aa). An ADP-alpha-D-glucose-binding site is contributed by K91.

It belongs to the glycosyltransferase 1 family. Bacterial/plant glycogen synthase subfamily. In terms of tissue distribution, found in seeds and pollen.

It is found in the plastid. The protein localises to the chloroplast. Its subcellular location is the amyloplast. It catalyses the reaction an NDP-alpha-D-glucose + [(1-&gt;4)-alpha-D-glucosyl](n) = [(1-&gt;4)-alpha-D-glucosyl](n+1) + a ribonucleoside 5'-diphosphate + H(+). It participates in glycan biosynthesis; starch biosynthesis. This is Granule-bound starch synthase 1, chloroplastic/amyloplastic (WAXY) from Triticum aestivum (Wheat).